The primary structure comprises 255 residues: SLA class II histocompatibility antigen, DQ haplotype D alpha chain (255 aa).

A signal peptide spans 1 to 23 (MVPGRVLMWGALALTAVMSACGG). Residues 24 to 120 (EDIAADHVAS…QVPEVTVFPK (97 aa)) are alpha-1. At 24–217 (EDIAADHVAS…IPAPMSELTE (194 aa)) the chain is on the extracellular side. N-linked (GlcNAc...) asparagine glycans are attached at residues asparagine 104 and asparagine 144. The 93-residue stretch at 113-205 (PEVTVFPKSP…LDKPLLKHWE (93 aa)) folds into the Ig-like C1-type domain. The interval 121–204 (SPVMLGQPNT…GLDKPLLKHW (84 aa)) is alpha-2. Cysteine 133 and cysteine 189 form a disulfide bridge. The interval 205–217 (EPEIPAPMSELTE) is connecting peptide. A helical transmembrane segment spans residues 218-240 (TVVCALGLIVGLVGIVVGTVFII). Over 241 to 255 (QGLRSGGPSRHQGSL) the chain is Cytoplasmic.

It belongs to the MHC class II family.

It localises to the membrane. This chain is SLA class II histocompatibility antigen, DQ haplotype D alpha chain, found in Sus scrofa (Pig).